Consider the following 95-residue polypeptide: Small ribosomal subunit protein uS19 (95 aa).

Belongs to the universal ribosomal protein uS19 family.

In terms of biological role, protein S19 forms a complex with S13 that binds strongly to the 16S ribosomal RNA. This Treponema pallidum (strain Nichols) protein is Small ribosomal subunit protein uS19 (rpsS).